Reading from the N-terminus, the 500-residue chain is Signal transduction histidine-protein kinase/phosphatase UhpB (500 aa).

8 helical membrane-spanning segments follow: residues 8–28, 78–98, 112–132, 140–160, 185–205, 207–224, 231–249, and 253–273; these read LITV…LWSI, VALA…LPVA, LLLQ…PWLG, ALLL…VFWH, HLIW…GLPA, LSRF…ALAW, ALIA…QTWH, and VDLL…GAGI. Topologically, residues 274–500 are cytoplasmic; it reads QRLRELNQSL…VSVSLPQRYV (227 aa). The Histidine kinase domain maps to 311–499; that stretch reads ELHDDIGQTI…RVSVSLPQRY (189 aa). His-313 is subject to Phosphohistidine; by autocatalysis.

Autophosphorylated.

The protein localises to the cell inner membrane. The enzyme catalyses ATP + protein L-histidine = ADP + protein N-phospho-L-histidine.. Functionally, part of the UhpABC signaling cascade that controls the expression of the hexose phosphate transporter UhpT. UhpB functions as a membrane-associated protein kinase that autophosphorylates in response to interaction with UhpC, and subsequently transfers its phosphate group to the response regulator UhpA. Can also dephosphorylate UhpA. The chain is Signal transduction histidine-protein kinase/phosphatase UhpB (uhpB) from Salmonella typhimurium (strain LT2 / SGSC1412 / ATCC 700720).